A 69-amino-acid polypeptide reads, in one-letter code: Alpha-conotoxin-like Tx1 (69 aa).

The N-terminal stretch at 1–21 (MGMRMMFVVFLLVVLASTVVS) is a signal peptide. Positions 22-49 (STSGRRAFHGRNAAAKASGLVSLTDRRP) are excised as a propeptide. 2 disulfide bridges follow: Cys-51/Cys-57 and Cys-52/Cys-65. The ser-Xaa-Pro motif, crucial for potent interaction with nAChR stretch occupies residues 53–55 (SDP). Position 66 is a glycine amide (Gly-66).

The protein belongs to the conotoxin A superfamily. Expressed by the venom duct.

The protein localises to the secreted. Functionally, alpha-conotoxins act on postsynaptic membranes, they bind to the nicotinic acetylcholine receptors (nAChR) and thus inhibit them. This Conus textile (Cloth-of-gold cone) protein is Alpha-conotoxin-like Tx1.